Reading from the N-terminus, the 327-residue chain is Annexin A8 (327 aa).

Annexin repeat units follow at residues 21 to 92 (FNPD…ALMY), 93 to 164 (PPYR…CLLQ), 177 to 249 (GLAL…TVVK), and 253 to 324 (NLHG…NLVG). The Ca(2+) site is built by methionine 266, glycine 268, glycine 270, and aspartate 310.

The protein belongs to the annexin family.

This protein is an anticoagulant protein that acts as an indirect inhibitor of the thromboplastin-specific complex, which is involved in the blood coagulation cascade. The polypeptide is Annexin A8 (ANXA8) (Bos taurus (Bovine)).